We begin with the raw amino-acid sequence, 209 residues long: A-type ATP synthase subunit D (209 aa).

The protein belongs to the V-ATPase D subunit family. As to quaternary structure, has multiple subunits with at least A(3), B(3), C, D, E, F, H, I and proteolipid K(x).

Its subcellular location is the cell membrane. Component of the A-type ATP synthase that produces ATP from ADP in the presence of a proton gradient across the membrane. The chain is A-type ATP synthase subunit D from Thermoplasma volcanium (strain ATCC 51530 / DSM 4299 / JCM 9571 / NBRC 15438 / GSS1).